A 506-amino-acid chain; its full sequence is MDSGLGSSYPEERSGPPEIRPEEINFEELIGTGSFGKVYKGRCRQKAVAVKLLHKQNFDAATLSAFRKEVHLMSKIYHPNICLFMGACTIPGRCVIVTELVPKGNLETLLHDQKIQLPLYLRMRMARDAALGINWLHESNPVFVHRDIKSSNLLVDENMRVKICDFGLSALKQKHKMLKDQSSAKGTPLYMAPEVMMFKEFNESSDVYSFGIVLWEILTRKEPFSHHRELEKFREAVCVKHERPPIPNDCLDSLRRLIEKCWDKEPISRPSFKEIISALDHVIIDAAISDLNGRDFWKKSFLTEQEVPWEAFIDALCNWSKAPARNQCDKTSIDYLNIKCLKAVLAESPKSEGTGVETVVNIEKFGKILEFFGPVPEPAPGHSIMDTVREILSQKWFHGDLDTTEAASRLNGQPIGSFLIRFSSTNAGCFTISQVVDGGSIKHQRVSRQGVKFNYQNVIYNSLIEIVSKNGGGANGDVKLDSQLGVPNYKFMSLFCVLNKESEVYQ.

The tract at residues 1–21 is disordered; that stretch reads MDSGLGSSYPEERSGPPEIRP. Residues 10–21 are compositionally biased toward basic and acidic residues; sequence PEERSGPPEIRP. Residues 24 to 284 enclose the Protein kinase domain; it reads INFEELIGTG…IISALDHVII (261 aa). ATP is bound by residues 30–38 and Lys-51; that span reads IGTGSFGKV. Residue Asp-147 is the Proton acceptor of the active site. The 93-residue stretch at 396–488 folds into the SH2 domain; it reads WFHGDLDTTE…KLDSQLGVPN (93 aa).

The protein belongs to the protein kinase superfamily. TKL Ser/Thr protein kinase family. SH2 domain-containing protein kinase subfamily.

Its subcellular location is the membrane. It catalyses the reaction L-seryl-[protein] + ATP = O-phospho-L-seryl-[protein] + ADP + H(+). The catalysed reaction is L-threonyl-[protein] + ATP = O-phospho-L-threonyl-[protein] + ADP + H(+). Required for proper chemotaxis and phagocytosis; proper spatiotemporal control of F-actin levels in chemotaxing cells. Negative regulator of the PI3K (phosphatidylinositol 3 kinase) pathway. Predominantly phosphorylates serines and threonines and tyrosines at a lower level. The chain is Dual specificity protein kinase shkC (shkC) from Dictyostelium discoideum (Social amoeba).